We begin with the raw amino-acid sequence, 496 residues long: Transmembrane transporter swnT (496 aa).

Transmembrane regions (helical) follow at residues 40-60, 72-92, 124-144, 162-182, and 191-211; these read LSAIGIGYGVTNTAVGIPLIL, VFWGFLAMAAVGLATATTLAE, AMISWVAAVATGSSGNLSVPL, WMGFAAFQAINVVTCFGACFE, and AFLLFNVVSVGVIIVALFAMA. Asparagine 225 is a glycosylation site (N-linked (GlcNAc...) asparagine). 6 consecutive transmembrane segments (helical) span residues 270–290, 314–334, 368–388, 396–416, 434–454, and 467–487; these read LLWTIFIASTSGLLVVLAVLV, AAAIGLWIPVLILVLASVWSI, PIWSLVGSAVGTALFGCLYLA, LIATGILLQYISYSIPTVLVL, GLVANFIMLAWTVVAFVFYCF, and YVSGVLVVIATFIAALWILYA.

Belongs to the amino acid-polyamine-organocation (APC) superfamily. Amino acid/choline transporter (ACT) (TC 2.A.3.4) family.

Its subcellular location is the membrane. Transmembrane transporter; part of the gene cluster that mediates the biosynthesis of swainsonine, a cytotoxic fungal alkaloid and a potential cancer therapy drug. Does not mediate the secretion of SW and the exact role of swnT in SW biosynthesis remains to be determined. The chain is Transmembrane transporter swnT from Metarhizium robertsii (strain ARSEF 23 / ATCC MYA-3075) (Metarhizium anisopliae (strain ARSEF 23)).